Consider the following 341-residue polypeptide: Heterogeneous nuclear ribonucleoproteins A2/B1 (341 aa).

RRM domains are found at residues 9 to 92 (RKLF…ESGK) and 100 to 179 (KKLF…LSRQ). A Glycyl lysine isopeptide (Lys-Gly) (interchain with G-Cter in SUMO2) cross-link involves residue Lys-10. At Ser-17 the chain carries Phosphoserine. Omega-N-methylarginine is present on Arg-26. Residue Ser-73 is modified to Phosphoserine. Lys-92 is modified (N6,N6-dimethyllysine; alternate). Lys-92 is covalently cross-linked (Glycyl lysine isopeptide (Lys-Gly) (interchain with G-Cter in SUMO2); alternate). Glycyl lysine isopeptide (Lys-Gly) (interchain with G-Cter in SUMO2) cross-links involve residues Lys-100, Lys-108, and Lys-125. At Thr-128 the chain carries Phosphothreonine. Ser-137 carries the post-translational modification Phosphoserine. Residue Lys-140 forms a Glycyl lysine isopeptide (Lys-Gly) (interchain with G-Cter in SUMO2) linkage. Thr-147 carries the phosphothreonine modification. Glycyl lysine isopeptide (Lys-Gly) (interchain with G-Cter in SUMO2); alternate cross-links involve residues Lys-156 and Lys-161. Residues Lys-156 and Lys-161 each carry the N6-acetyllysine; alternate modification. Thr-164 is modified (phosphothreonine). Residue Lys-174 forms a Glycyl lysine isopeptide (Lys-Gly) (interchain with G-Cter in SUMO2) linkage. Phosphoserine is present on residues Ser-177 and Ser-189. Residues 181-341 (MQEVQSSRSG…SGGYGGRSRY (161 aa)) are disordered. The segment covering 190–211 (GRGGNFGFGDSRGGGGNFGPGP) has biased composition (gly residues). An Asymmetric dimethylarginine; alternate modification is found at Arg-191. At Arg-191 the chain carries Dimethylated arginine; alternate. Arg-191 is subject to Omega-N-methylarginine; alternate. Ser-200 is subject to Phosphoserine. Arg-201 carries the asymmetric dimethylarginine; alternate modification. Arg-201 is subject to Dimethylated arginine; alternate. Arg-201 carries the post-translational modification Omega-N-methylarginine; alternate. A Phosphoserine modification is found at Ser-213. Arg-216 is modified (omega-N-methylarginine). Phosphoserine is present on residues Ser-219 and Ser-224. Arg-226 carries the post-translational modification Omega-N-methylarginine. Position 247 is a phosphoserine (Ser-247). Residue Arg-254 is modified to Asymmetric dimethylarginine; alternate. Arg-254 bears the Omega-N-methylarginine; alternate mark. The tract at residues 296–335 (QQPSNYGPMKSGNFGGSRNMGGPYGGGNYGPGGSGGSGGY) is nuclear targeting sequence. Over residues 308–341 (NFGGSRNMGGPYGGGNYGPGGSGGSGGYGGRSRY) the composition is skewed to gly residues. Ser-312 is subject to Phosphoserine. Residue Arg-313 is modified to Omega-N-methylarginine. Tyr-319 bears the Phosphotyrosine mark. Phosphoserine occurs at positions 329 and 332. Tyr-335 is modified (phosphotyrosine). Arg-338 is modified (omega-N-methylarginine).

As to quaternary structure, identified in the spliceosome C complex. Identified in a IGF2BP1-dependent mRNP granule complex containing untranslated mRNAs. Interacts with IGF2BP1. Interacts with C9orf72. Interacts with DGCR8. Interacts with TARDBP. Interacts with CKAP5. Interacts with PPIA/CYPA. Interacts (via C-terminus) with FAM76B; the interaction results in retention of HNRNPA2B1 in the nucleus and inhibition of the NF-kappa-B-mediated inflammatory pathway. Interacts with NF-kappa-B inhibitors NFKBIA and NFKBIE; the interaction may be mediated by the RRM2 domain of HNRNPA2B1, and HNRNPA2B1 may interact simultaneously with FAM76B and either NFKBIA or NFKBIE to form a complex. Sumoylated in exosomes, promoting miRNAs-binding. In terms of processing, asymmetric dimethylation at Arg-254 constitutes the major methylation site. According to a report, methylation affects subcellular location and promotes nuclear localization. According to another report, methylation at Arg-254 does not influence nucleocytoplasmic shuttling.

Its subcellular location is the nucleus. The protein resides in the nucleoplasm. It localises to the cytoplasmic granule. The protein localises to the secreted. It is found in the extracellular exosome. Its function is as follows. Heterogeneous nuclear ribonucleoprotein (hnRNP) that associates with nascent pre-mRNAs, packaging them into hnRNP particles. The hnRNP particle arrangement on nascent hnRNA is non-random and sequence-dependent and serves to condense and stabilize the transcripts and minimize tangling and knotting. Packaging plays a role in various processes such as transcription, pre-mRNA processing, RNA nuclear export, subcellular location, mRNA translation and stability of mature mRNAs. Forms hnRNP particles with at least 20 other different hnRNP and heterogeneous nuclear RNA in the nucleus. Involved in transport of specific mRNAs to the cytoplasm in oligodendrocytes and neurons: acts by specifically recognizing and binding the A2RE (21 nucleotide hnRNP A2 response element) or the A2RE11 (derivative 11 nucleotide oligonucleotide) sequence motifs present on some mRNAs, and promotes their transport to the cytoplasm. Specifically binds single-stranded telomeric DNA sequences, protecting telomeric DNA repeat against endonuclease digestion. Also binds other RNA molecules, such as primary miRNA (pri-miRNAs): acts as a nuclear 'reader' of the N6-methyladenosine (m6A) mark by specifically recognizing and binding a subset of nuclear m6A-containing pri-miRNAs. Binding to m6A-containing pri-miRNAs promotes pri-miRNA processing by enhancing binding of DGCR8 to pri-miRNA transcripts. Involved in miRNA sorting into exosomes following sumoylation, possibly by binding (m6A)-containing pre-miRNAs. Acts as a regulator of efficiency of mRNA splicing, possibly by binding to m6A-containing pre-mRNAs. Plays a role in the splicing of pyruvate kinase PKM by binding repressively to sequences flanking PKM exon 9, inhibiting exon 9 inclusion and resulting in exon 10 inclusion and production of the PKM M2 isoform. The sequence is that of Heterogeneous nuclear ribonucleoproteins A2/B1 (HNRNPA2B1) from Bos taurus (Bovine).